The sequence spans 673 residues: Annexin A6 (673 aa).

An N-acetylalanine modification is found at alanine 2. Serine 13 carries the post-translational modification Phosphoserine. 8 Annexin repeats span residues 20–91 (FDPN…GLMR), 92–163 (PPAY…VLLQ), 175–247 (DLVQ…AVVK), 251–322 (STPE…KLSG), 363–434 (FNPD…GLMM), 435–506 (PPAH…SLAT), 521–595 (EDAQ…AIVQ), and 599–670 (NKPL…ALCG). The residue at position 30 (tyrosine 30) is a Phosphotyrosine. N6-acetyllysine occurs at positions 63, 68, 75, and 81. Tyrosine 201 carries the phosphotyrosine modification. Residues lysine 306, lysine 370, and lysine 418 each carry the N6-acetyllysine modification. The residue at position 422 (serine 422) is a Phosphoserine. Lysine 483 carries the N6-acetyllysine modification. Serine 537 is subject to Phosphoserine. The residue at position 620 (lysine 620) is an N6-acetyllysine.

Belongs to the annexin family. In terms of processing, phosphorylated in response to growth factor stimulation.

The protein resides in the cytoplasm. Its subcellular location is the melanosome. May associate with CD21. May regulate the release of Ca(2+) from intracellular stores. In Homo sapiens (Human), this protein is Annexin A6 (ANXA6).